A 717-amino-acid polypeptide reads, in one-letter code: Aryl hydrocarbon receptor nuclear translocator 2 (717 aa).

2 disordered regions span residues 1 to 20 and 35 to 74; these read MATP…PGSV and MAGA…IERR. Arginine 42 carries the omega-N-methylarginine modification. Basic and acidic residues predominate over residues 63–73; it reads FSRENHSEIER. The bHLH domain maps to 63–116; that stretch reads FSRENHSEIERRRRNKMTQYITELSDMVPTCSALARKPDKLTILRMAVSHMKSM. PAS domains follow at residues 134 to 209 and 323 to 393; these read TEQE…MTGR and PVCM…VKLK. The 44-residue stretch at 398–441 folds into the PAC domain; the sequence is SVMYRFRTKNREWMLIRTSSFTFQNPYSDEIEYIICTNTNVKQL. The interval 548 to 717 is disordered; the sequence is NDIQSSSSTG…DLGMFPPFSE (170 aa). Composition is skewed to polar residues over residues 549-574 and 585-605; these read DIQS…QVAW and QIPS…TSHT. The segment covering 610–625 has biased composition (low complexity); that stretch reads PSSYSPLSSPATSSPS. Positions 642–651 are enriched in polar residues; that stretch reads SGQSSGQFQG. Positions 658–680 are enriched in low complexity; the sequence is SQWQSQHHGQQSGEQHSHQQPGQ.

In terms of assembly, efficient DNA binding requires dimerization with another bHLH protein. Heterodimer with NPAS4. Heterodimer with SIM1. Heterodimer with the aryl hydrocarbon receptor (AHR) or the SIM1 protein. Interacts with TACC3.

Its subcellular location is the nucleus. Its function is as follows. Transcription factor that plays a role in the development of the hypothalamo-pituitary axis, postnatal brain growth, and visual and renal function. Specifically recognizes the xenobiotic response element (XRE). The sequence is that of Aryl hydrocarbon receptor nuclear translocator 2 (ARNT2) from Homo sapiens (Human).